A 649-amino-acid chain; its full sequence is Replication protein E1 (649 aa).

Residues 83–85 carry the Nuclear localization signal motif; the sequence is KRK. Residues Ser89, Ser93, and Ser107 each carry the phosphoserine; by host modification. A Nuclear export signal motif is present at residues 106-115; that stretch reads ISPRLDAIKL. The interval 146–188 is disordered; that stretch reads TQVEKHGDPENGGDGQERDTGRDIEGEGVEHREAEAVDDSTRE. Residues 148–188 are compositionally biased toward basic and acidic residues; the sequence is VEKHGDPENGGDGQERDTGRDIEGEGVEHREAEAVDDSTRE. Residues 187 to 353 are DNA-binding region; sequence REHADTSGIL…QTVIEHSLAD (167 aa). The SF3 helicase domain maps to 452 to 602; that stretch reads IEFIPFLSKL…FPFDRNGNAV (151 aa). 478–485 lines the ATP pocket; that stretch reads GPPDTGKS. Lys559 is covalently cross-linked (Glycyl lysine isopeptide (Lys-Gly) (interchain with G-Cter in SUMO)).

The protein belongs to the papillomaviridae E1 protein family. As to quaternary structure, can form hexamers. Interacts with E2 protein; this interaction increases E1 DNA binding specificity. Interacts with host DNA polymerase subunit POLA2. Interacts with host single stranded DNA-binding protein RPA1. Interacts with host TOP1; this interaction stimulates the enzymatic activity of TOP1. Post-translationally, phosphorylated. In terms of processing, sumoylated.

The protein resides in the host nucleus. The catalysed reaction is Couples ATP hydrolysis with the unwinding of duplex DNA by translocating in the 3'-5' direction.. It carries out the reaction ATP + H2O = ADP + phosphate + H(+). Its function is as follows. ATP-dependent DNA 3'-5' helicase required for initiation of viral DNA replication. It forms a complex with the viral E2 protein. The E1-E2 complex binds to the replication origin which contains binding sites for both proteins. During the initial step, a dimer of E1 interacts with a dimer of protein E2 leading to a complex that binds the viral origin of replication with high specificity. Then, a second dimer of E1 displaces the E2 dimer in an ATP-dependent manner to form the E1 tetramer. Following this, two E1 monomers are added to each half of the site, which results in the formation of two E1 trimers on the viral ori. Subsequently, two hexamers will be created. The double hexamer acts as a bi-directional helicase machinery and unwinds the viral DNA and then recruits the host DNA polymerase to start replication. The sequence is that of Replication protein E1 from Human papillomavirus 11.